The sequence spans 536 residues: Maintenance of mitochondrial morphology protein 1 (536 aa).

At 1–25 the chain is on the lumenal side; the sequence is MAGPSNQTQPPPPVLTQPSLSFTQG. A helical transmembrane segment spans residues 26–46; sequence LLVGQLSVVLLIGAFIKFFIF. At 47–536 the chain is on the cytoplasmic side; it reads GEAPPHPSRN…GSMPDPVVVT (490 aa). Disordered stretches follow at residues 52 to 135, 275 to 331, 416 to 467, and 505 to 536; these read HPSR…SHQP, GPGT…ATAA, GRTG…GGSM, and YGGAQGGGGGGGRGGEEQFAIPGSMPDPVVVT. Composition is skewed to polar residues over residues 69–81, 88–105, and 112–121; these read YSLNSISADSSPR, STSNILRPVPSSSTNTRS, and YSATPTNPTS. Residues 122-132 show a composition bias toward basic residues; sequence KHSRSRPHHSS. Residues 134-409 enclose the SMP-LTD domain; the sequence is QPESLDWFNV…EPRVQVVGLP (276 aa). The span at 321 to 331 shows a compositional bias: low complexity; the sequence is TNTNTAGATAA. Composition is skewed to gly residues over residues 442 to 467 and 507 to 517; these read TAGGDGVGVRGGGGGGGVGGSGGGSM and GAQGGGGGGGR.

Belongs to the MMM1 family. Homodimer. Component of the ER-mitochondria encounter structure (ERMES) or MDM complex, composed of MMM1, MDM10, MDM12 and MDM34. An MMM1 homodimer associates with one molecule of MDM12 on each side in a pairwise head-to-tail manner, and the SMP-LTD domains of MMM1 and MDM12 generate a continuous hydrophobic tunnel for phospholipid trafficking.

It localises to the endoplasmic reticulum membrane. In terms of biological role, component of the ERMES/MDM complex, which serves as a molecular tether to connect the endoplasmic reticulum (ER) and mitochondria. Components of this complex are involved in the control of mitochondrial shape and protein biogenesis, and function in nonvesicular lipid trafficking between the ER and mitochondria. The MDM12-MMM1 subcomplex functions in the major beta-barrel assembly pathway that is responsible for biogenesis of all outer membrane beta-barrel proteins, and acts in a late step after the SAM complex. The MDM10-MDM12-MMM1 subcomplex further acts in the TOM40-specific pathway after the action of the MDM12-MMM1 complex. Essential for establishing and maintaining the structure of mitochondria and maintenance of mtDNA nucleoids. The sequence is that of Maintenance of mitochondrial morphology protein 1 from Ajellomyces dermatitidis (strain ER-3 / ATCC MYA-2586) (Blastomyces dermatitidis).